A 202-amino-acid chain; its full sequence is Myosin regulatory light chain 10 (202 aa).

Residues 1–21 (MGQSSLDHGVQGPVAGTGDFG) form a disordered region. EF-hand domains lie at 60-95 (SQIQ…LGRI), 130-165 (DPEE…QADR), and 166-201 (FSEE…GEEK). Residues aspartate 73, asparagine 75, aspartate 77, and aspartate 84 each coordinate Ca(2+).

In terms of assembly, myosin is a hexamer of 2 heavy chains and 4 light chains. Specifically expressed in precursor B- and T-lymphocytes.

This is Myosin regulatory light chain 10 (Myl10) from Mus musculus (Mouse).